A 282-amino-acid chain; its full sequence is Lipoyl synthase (282 aa).

Residues Cys37, Cys42, Cys48, Cys63, Cys67, Cys70, and Ser274 each contribute to the [4Fe-4S] cluster site. Residues 49 to 263 (WGKGTATFMI…KTIGLEKGFS (215 aa)) form the Radical SAM core domain.

It belongs to the radical SAM superfamily. Lipoyl synthase family. The cofactor is [4Fe-4S] cluster.

Its subcellular location is the cytoplasm. It catalyses the reaction [[Fe-S] cluster scaffold protein carrying a second [4Fe-4S](2+) cluster] + N(6)-octanoyl-L-lysyl-[protein] + 2 oxidized [2Fe-2S]-[ferredoxin] + 2 S-adenosyl-L-methionine + 4 H(+) = [[Fe-S] cluster scaffold protein] + N(6)-[(R)-dihydrolipoyl]-L-lysyl-[protein] + 4 Fe(3+) + 2 hydrogen sulfide + 2 5'-deoxyadenosine + 2 L-methionine + 2 reduced [2Fe-2S]-[ferredoxin]. It functions in the pathway protein modification; protein lipoylation via endogenous pathway; protein N(6)-(lipoyl)lysine from octanoyl-[acyl-carrier-protein]: step 2/2. Its function is as follows. Catalyzes the radical-mediated insertion of two sulfur atoms into the C-6 and C-8 positions of the octanoyl moiety bound to the lipoyl domains of lipoate-dependent enzymes, thereby converting the octanoylated domains into lipoylated derivatives. This chain is Lipoyl synthase, found in Bacteroides thetaiotaomicron (strain ATCC 29148 / DSM 2079 / JCM 5827 / CCUG 10774 / NCTC 10582 / VPI-5482 / E50).